Reading from the N-terminus, the 463-residue chain is Probable diacyglycerol O-acyltransferase tgs1 (463 aa).

Methionine 1 carries the N-acetylmethionine modification. The active-site Proton acceptor is the histidine 137.

This sequence belongs to the long-chain O-acyltransferase family.

The catalysed reaction is an acyl-CoA + a 1,2-diacyl-sn-glycerol = a triacyl-sn-glycerol + CoA. The enzyme catalyses di-(9Z)-octadecenoylglycerol + (9Z)-octadecenoyl-CoA = 1,2,3-tri-(9Z-octadecenoyl)-glycerol + CoA. Its pathway is glycerolipid metabolism; triacylglycerol biosynthesis. Catalyzes the terminal and only committed step in triacylglycerol synthesis by using diacylglycerol and fatty acyl CoA as substrates. Required for storage lipid synthesis. In terms of biological role, upon expression in E.coli functions as a triacylglycerol synthase, making triacylglycerol (TG) from diolein and long-chain fatty acyl-CoA. Prefers C(26:0)-CoA over C(18:1)-CoA. TG synthesis activity increases in M.tuberculosis upon oxygen depletion and NO treatment, with concomitant accumulation of TG in inclusion bodies. As disruption of the gene encoding this protein obviates TG synthesis this seems to be the major enzyme involved in production of TG. Has no wax synthase activity to produce wax esters. This Mycobacterium tuberculosis (strain ATCC 25618 / H37Rv) protein is Probable diacyglycerol O-acyltransferase tgs1 (tgs1).